A 140-amino-acid polypeptide reads, in one-letter code: Large ribosomal subunit protein bL21 (140 aa).

A disordered region spans residues 106-140 (SGVKPAVGARTKIEPAVKPAKAKKSEAEASAEDAN).

This sequence belongs to the bacterial ribosomal protein bL21 family. Part of the 50S ribosomal subunit. Contacts protein L20.

Functionally, this protein binds to 23S rRNA in the presence of protein L20. In Paracoccus denitrificans (strain Pd 1222), this protein is Large ribosomal subunit protein bL21.